A 253-amino-acid chain; its full sequence is Diphthine synthase (253 aa).

S-adenosyl-L-methionine contacts are provided by residues aspartate 83, leucine 86, 111-112 (SI), leucine 163, and leucine 205.

Belongs to the diphthine synthase family. Homodimer.

It carries out the reaction 2-[(3S)-amino-3-carboxypropyl]-L-histidyl-[translation elongation factor 2] + 3 S-adenosyl-L-methionine = diphthine-[translation elongation factor 2] + 3 S-adenosyl-L-homocysteine + 3 H(+). Its pathway is protein modification; peptidyl-diphthamide biosynthesis. Functionally, S-adenosyl-L-methionine-dependent methyltransferase that catalyzes the trimethylation of the amino group of the modified target histidine residue in translation elongation factor 2 (EF-2), to form an intermediate called diphthine. The three successive methylation reactions represent the second step of diphthamide biosynthesis. The protein is Diphthine synthase of Pyrobaculum neutrophilum (strain DSM 2338 / JCM 9278 / NBRC 100436 / V24Sta) (Thermoproteus neutrophilus).